The following is a 1369-amino-acid chain: Neurofascin (1369 aa).

Positions 1 to 25 are cleaved as a signal peptide; it reads MVLHSHQLTYAGIAFALCLHHLISA. At 26-1235 the chain is on the extracellular side; sequence IEVPLDSNIQ…NHVDIATQGW (1210 aa). Ig-like C2-type domains lie at 42–138 and 144–231; these read PTIT…LQVS and PKEK…NPYT. 2 disulfide bridges follow: cysteine 64–cysteine 119 and cysteine 163–cysteine 214. Residues asparagine 241, asparagine 247, and asparagine 323 are each glycosylated (N-linked (GlcNAc...) asparagine). Ig-like C2-type domains are found at residues 262–350, 355–442, 448–535, and 539–626; these read PSFM…ISVR, PYWL…AFVS, PRIL…VRLE, and PTRI…AYLT. Cystine bridges form between cysteine 286/cysteine 334 and cysteine 376/cysteine 426. Residues asparagine 427, asparagine 464, and asparagine 501 are each glycosylated (N-linked (GlcNAc...) asparagine). Intrachain disulfides connect cysteine 470–cysteine 519 and cysteine 561–cysteine 610. 4 consecutive Fibronectin type-III domains span residues 645-740, 745-838, 843-945, and 949-1057; these read RPRD…TSGA, NPTG…SGED, APTD…TPEG, and SPRY…TPAS. A glycan (N-linked (GlcNAc...) asparagine) is linked at asparagine 692. A compositionally biased stretch (polar residues) spans 730–739; sequence MPSERYQTSG. The segment at 730–753 is disordered; that stretch reads MPSERYQTSGARPEINPTGVQGAG. N-linked (GlcNAc...) asparagine glycosylation is found at asparagine 767, asparagine 793, asparagine 853, asparagine 994, and asparagine 1009. The disordered stretch occupies residues 1078–1097; sequence TTATPTTETPPTEIPTTAIP. 4 N-linked (GlcNAc...) asparagine glycosylation sites follow: asparagine 1133, asparagine 1150, asparagine 1156, and asparagine 1171. The 90-residue stretch at 1133–1222 folds into the Fibronectin type-III 5 domain; sequence NGSSIWDIRA…SYITFTTSSA (90 aa). Residues 1236–1256 form a helical membrane-spanning segment; sequence FIGLMCAIALLVLILLIVCFI. At 1257 to 1369 the chain is on the cytoplasmic side; that stretch reads KRSRGGKYPV…SPVNAIYSLA (113 aa). Basic and acidic residues-rich tracts occupy residues 1266–1282 and 1289–1298; these read VRDN…KNVE and RSLESDEDNK. A disordered region spans residues 1266 to 1369; it reads VRDNKDEHLN…SPVNAIYSLA (104 aa). The segment covering 1300–1313 has biased composition (polar residues); that stretch reads LPNSQTSLDGTIKQ.

Belongs to the immunoglobulin superfamily. L1/neurofascin/NgCAM family. In terms of processing, N-glycosylated and O-glycosylated. Post-translationally, may be proteolytically cleaved at Arg-636.

It is found in the cell membrane. Functionally, cell adhesion, ankyrin-binding protein which may be involved in neurite extension, axonal guidance, synaptogenesis, myelination and neuron-glial cell interactions. This chain is Neurofascin (NFASC), found in Gallus gallus (Chicken).